We begin with the raw amino-acid sequence, 579 residues long: MVRSMPLRGGRPQAPTAPTRWQLQNTVFAAESQNQPSASEAVVSSTRDAALQRRRALTTDGKAATLVQGSVGGGRVRSARDQRQPGWVRRDKGATSGVPFNLSRSSLPITNRQHPLTDTAANARLRAYEQEVKGRFDRIVPLLQRVSALQHEPDFIEQAQRLTRAELGFDLPQHILERAWVRPLDMRALFAWCVFESHRLFSDRFFQDDPLDGAAGSVAARDFEQFLLDCGIHLLDVSPCADGRLAHTVAYALRIPFSAVRRRSHAGAMFDVENTVNRWVKTEHRRHREGMPNPSTEPTRYLKVVTYHFSSLDPQHQGCAAHGSNDELAAAAGHQRLLDFREAVENSFCCGASVDLLLIGLDTDTDAIRVHPPSRDSEMVLDQWLCARELHAATASMTADQAMAQIAEAIEAGASGPMEPGMVAFLTRLIANNCSQIDYVQDLHGAPYPDAGHAERFIGVGIGFKEVHLRNLTYFAHLDTVEEGAPDLDVGVKIFKGLNVSRDLPIPVVVRFDYSGRVPGARERAIADCQRVNQAIADRYGELVNQGLLHTCLTVRDRNQTAPAEVVGSTLAPPLQEAH.

The interval 72 to 95 (GGGRVRSARDQRQPGWVRRDKGAT) is disordered. A compositionally biased stretch (basic and acidic residues) spans 78–93 (SARDQRQPGWVRRDKG). C240 serves as a coordination point for Zn(2+). D242 acts as the Proton acceptor in catalysis. 2 residues coordinate Zn(2+): H308 and C319.

It belongs to the beta-class carbonic anhydrase family. CsoSCA subfamily. As to quaternary structure, homodimer. Zn(2+) serves as cofactor.

It localises to the carboxysome. The catalysed reaction is hydrogencarbonate + H(+) = CO2 + H2O. Its activity is regulated as follows. Inhibited by dithiothreitol, partially inhibited by acetatzolamide and cyanide. In terms of biological role, reversible hydration of carbon dioxide. Essential for photosynthetic carbon dioxide fixation, supplies CO(2) to RuBisCO (ribulose bisphosphate carboxylase, cbbL-cbbS) in the carboxysome. The sequence is that of Carboxysome shell carbonic anhydrase from Parasynechococcus marenigrum (strain WH8102).